Here is a 213-residue protein sequence, read N- to C-terminus: Adenylate kinase (213 aa).

Residue 10–15 participates in ATP binding; it reads GAGKGT. The interval 30–59 is NMP; the sequence is STGDMLRAALKEGTPLGLEAKKYMDQGALV. AMP contacts are provided by residues Thr-31, Arg-36, 57–59, 85–88, and Gln-92; these read ALV and GFPR. Positions 126 to 163 are LID; sequence GRRTCRSCGAGFHVMFDPPKTDGKCDKCGGELYQRDDD. ATP is bound at residue Arg-127. The Zn(2+) site is built by Cys-130, Cys-133, Cys-150, and Cys-153. Residues Arg-160 and Arg-171 each coordinate AMP. Gly-199 serves as a coordination point for ATP.

It belongs to the adenylate kinase family. In terms of assembly, monomer.

It is found in the cytoplasm. It carries out the reaction AMP + ATP = 2 ADP. It participates in purine metabolism; AMP biosynthesis via salvage pathway; AMP from ADP: step 1/1. Catalyzes the reversible transfer of the terminal phosphate group between ATP and AMP. Plays an important role in cellular energy homeostasis and in adenine nucleotide metabolism. In Syntrophobacter fumaroxidans (strain DSM 10017 / MPOB), this protein is Adenylate kinase.